We begin with the raw amino-acid sequence, 393 residues long: tRNA-specific 2-thiouridylase MnmA (393 aa).

Residues 19 to 26 (AMSGGVDS) and leucine 45 each bind ATP. Cysteine 113 serves as the catalytic Nucleophile. A disulfide bridge connects residues cysteine 113 and cysteine 210. Position 137 (glycine 137) interacts with ATP. The segment at 160–162 (RDQ) is interaction with tRNA. The active-site Cysteine persulfide intermediate is cysteine 210.

This sequence belongs to the MnmA/TRMU family.

The protein localises to the cytoplasm. It catalyses the reaction S-sulfanyl-L-cysteinyl-[protein] + uridine(34) in tRNA + AH2 + ATP = 2-thiouridine(34) in tRNA + L-cysteinyl-[protein] + A + AMP + diphosphate + H(+). Catalyzes the 2-thiolation of uridine at the wobble position (U34) of tRNA, leading to the formation of s(2)U34. This Afipia carboxidovorans (strain ATCC 49405 / DSM 1227 / KCTC 32145 / OM5) (Oligotropha carboxidovorans) protein is tRNA-specific 2-thiouridylase MnmA.